A 67-amino-acid chain; its full sequence is Large ribosomal subunit protein uL29 (67 aa).

The protein belongs to the universal ribosomal protein uL29 family.

This chain is Large ribosomal subunit protein uL29, found in Halorhodospira halophila (strain DSM 244 / SL1) (Ectothiorhodospira halophila (strain DSM 244 / SL1)).